The following is an 88-amino-acid chain: Small ribosomal subunit protein bS20 (88 aa).

The span at 1 to 22 shows a compositional bias: basic residues; the sequence is MANIKSSKKRSIQSEKKRKYNS. Residues 1-26 form a disordered region; that stretch reads MANIKSSKKRSIQSEKKRKYNSSKKS.

It belongs to the bacterial ribosomal protein bS20 family.

Binds directly to 16S ribosomal RNA. This is Small ribosomal subunit protein bS20 from Wigglesworthia glossinidia brevipalpis.